Consider the following 538-residue polypeptide: Natural resistance-associated macrophage protein 1 (538 aa).

Residues 1–36 (MTGDTDPPKQSRTQYGSISSSPSPGPPQVPPGGTYL) form a disordered region. Residues 1-54 (MTGDTDPPKQSRTQYGSISSSPSPGPPQVPPGGTYLSEKIPIPNAEPGTFSLRK) lie on the Cytoplasmic side of the membrane. Residues 55-75 (LWAFTGPGFLMSIAYLDPGNI) traverse the membrane as a helical segment. Residues 76 to 81 (QSDLQA) lie on the Extracellular side of the membrane. Residues 82–102 (GAVAGFKLLWVLLWATVLGLL) form a helical membrane-spanning segment. Over 103–139 (CQRLAARLGVVTGKDLGEICHLYYPKVPRTLLWLNME) the chain is Cytoplasmic. A helical transmembrane segment spans residues 140 to 160 (LAIVGSDMQEVIGTAIAFNLL). At 161 to 164 (SAGR) the chain is on the extracellular side. Residues 165-185 (IPLWGGVLITVVDTFFFLYLN) form a helical membrane-spanning segment. At 186–193 (NYGLRKLE) the chain is on the cytoplasmic side. A helical membrane pass occupies residues 194–214 (AFFAFLIAIMAFTFGYEYVVA). Residues 215–240 (RPAQGALLRGLFLPSCSGCGQPELLQ) are Extracellular-facing. The chain crosses the membrane as a helical span at residues 241 to 261 (AVGIVGAIIMPHNIYLHSALV). At 262-286 (KSREVDRTRREDIREANMYFLIEST) the chain is on the cytoplasmic side. A helical membrane pass occupies residues 287-307 (IALFVSFFINLFVMAVFGQAF). Residues 308–346 (YQQTNQAAFNICANSSLHDYAKIFPRNNLTVAVDFYQGG) are Extracellular-facing. 2 N-linked (GlcNAc...) asparagine glycosylation sites follow: N321 and N335. Residues 347 to 367 (VILGCLFGPAALYIWAVGLLA) traverse the membrane as a helical segment. At 368–394 (AGQSSTMTGTYAGQFVMEGFLKLRWSR) the chain is on the cytoplasmic side. A helical transmembrane segment spans residues 395–415 (FARLLLTRSCAILPALLVAVF). Residues 416 to 432 (KELQDLSSLNDLLNVLQ) are Extracellular-facing. The helical transmembrane segment at 433-453 (SLLLPFAVLPILTFTSMPALM) threads the bilayer. Residues 454–468 (QEFASGRVNKVITSS) are Cytoplasmic-facing. Residues 469 to 489 (IMLLVCAINFYFLVSYLPSLP) traverse the membrane as a helical segment. The Extracellular portion of the chain corresponds to 490-492 (HPA). The chain crosses the membrane as a helical span at residues 493 to 513 (YFGLVALLAVIYLGLTTYLVW). Topologically, residues 514–538 (TCLIAHGATLLVHSSHQHFLYGLLE) are cytoplasmic.

The protein belongs to the NRAMP family.

The protein localises to the late endosome membrane. It is found in the lysosome membrane. It carries out the reaction Zn(2+)(in) + H(+)(out) = Zn(2+)(out) + H(+)(in). It catalyses the reaction Fe(2+)(in) + H(+)(out) = Fe(2+)(out) + H(+)(in). The catalysed reaction is Mn(2+)(in) + H(+)(out) = Mn(2+)(out) + H(+)(in). In terms of biological role, macrophage-specific antiporter that fluxes metal ions in either direction against a proton gradient. Localized to late endosomal lysosomal membranes, delivers bivalent cations from the cytosol into these acidic compartments where they may directly affect antimicrobial activity. Involved in iron metabolism and host natural resistance to infection with intracellular parasites. Pathogen resistance involves sequestration of Fe(2+) and Mn(2+), cofactors of both prokaryotic and eukaryotic catalases and superoxide dismutases, not only to protect the macrophage against its own generation of reactive oxygen species, but to deny the cations to the pathogen for synthesis of its protective enzymes. The sequence is that of Natural resistance-associated macrophage protein 1 (SLC11A1) from Sus scrofa (Pig).